The chain runs to 447 residues: Probable glycine dehydrogenase (decarboxylating) subunit 1 (447 aa).

It belongs to the GcvP family. N-terminal subunit subfamily. As to quaternary structure, the glycine cleavage system is composed of four proteins: P, T, L and H. In this organism, the P 'protein' is a heterodimer of two subunits.

The catalysed reaction is N(6)-[(R)-lipoyl]-L-lysyl-[glycine-cleavage complex H protein] + glycine + H(+) = N(6)-[(R)-S(8)-aminomethyldihydrolipoyl]-L-lysyl-[glycine-cleavage complex H protein] + CO2. In terms of biological role, the glycine cleavage system catalyzes the degradation of glycine. The P protein binds the alpha-amino group of glycine through its pyridoxal phosphate cofactor; CO(2) is released and the remaining methylamine moiety is then transferred to the lipoamide cofactor of the H protein. The polypeptide is Probable glycine dehydrogenase (decarboxylating) subunit 1 (Azorhizobium caulinodans (strain ATCC 43989 / DSM 5975 / JCM 20966 / LMG 6465 / NBRC 14845 / NCIMB 13405 / ORS 571)).